Reading from the N-terminus, the 371-residue chain is tRNA-specific 2-thiouridylase MnmA (371 aa).

Residues 13–20 (GMSGGVDS) and methionine 39 each bind ATP. Residues 99–101 (NPD) form an interaction with target base in tRNA region. The active-site Nucleophile is the cysteine 104. Cysteine 104 and cysteine 200 are disulfide-bonded. Glycine 128 lines the ATP pocket. Residues 150-152 (KDQ) form an interaction with tRNA region. Cysteine 200 acts as the Cysteine persulfide intermediate in catalysis. The segment at 308–309 (RY) is interaction with tRNA.

Belongs to the MnmA/TRMU family.

It localises to the cytoplasm. The catalysed reaction is S-sulfanyl-L-cysteinyl-[protein] + uridine(34) in tRNA + AH2 + ATP = 2-thiouridine(34) in tRNA + L-cysteinyl-[protein] + A + AMP + diphosphate + H(+). Catalyzes the 2-thiolation of uridine at the wobble position (U34) of tRNA, leading to the formation of s(2)U34. The protein is tRNA-specific 2-thiouridylase MnmA of Bacillus mycoides (strain KBAB4) (Bacillus weihenstephanensis).